A 41-amino-acid polypeptide reads, in one-letter code: Large ribosomal subunit protein bL36 (41 aa).

Residues 1-21 are disordered; that stretch reads MKIRNSLKSLRGRHRDNQLVR.

It belongs to the bacterial ribosomal protein bL36 family.

The sequence is that of Large ribosomal subunit protein bL36 from Methylobacterium sp. (strain 4-46).